A 377-amino-acid polypeptide reads, in one-letter code: Meiotic driver cw9 (377 aa).

2 disordered regions span residues 1-49 and 64-100; these read MKNK…DLNN and NKST…GTTD. Residues 11–29 show a composition bias toward basic and acidic residues; that stretch reads SMDEMSAKNDNEIDLEKGP. The next 7 helical transmembrane spans lie at 105-125, 142-162, 172-192, 218-238, 252-272, 276-296, and 306-326; these read FLIK…PAVC, WTLF…LTYF, VTII…AQCV, VVII…RSKF, CSIS…FWTL, FSGL…TKGL, and ATGY…LFFY.

This sequence belongs to the WTF family. As to quaternary structure, homomer. Forms protein aggregates. The two isoforms can interact with each other and with themselves. High sequence similarity is required for their interaction.

It localises to the spore membrane. The protein localises to the vacuole membrane. The protein resides in the ascus epiplasm. Its subcellular location is the cytoplasm. It is found in the endoplasmic reticulum membrane. Its function is as follows. Promotes unequal transmission of alleles from the parental zygote to progeny spores by acting as poison/antidote system where the poison and antidote proteins are produced from the same locus; the poison component is trans-acting and targets all spores within an ascus whereas the antidote component is spore-specific, leading to poisoning of all progeny that do not inherit the allele. In terms of biological role, localizes isoform 2 to the vacuole thereby facilitating its degradation. Forms toxic aggregates that disrupt spore maturation. The polypeptide is Meiotic driver cw9 (Schizosaccharomyces pombe (Fission yeast)).